We begin with the raw amino-acid sequence, 273 residues long: Ribosomal RNA small subunit methyltransferase A (273 aa).

S-adenosyl-L-methionine is bound by residues asparagine 18, leucine 20, glycine 45, glutamate 66, aspartate 91, and asparagine 113.

Belongs to the class I-like SAM-binding methyltransferase superfamily. rRNA adenine N(6)-methyltransferase family. RsmA subfamily.

The protein resides in the cytoplasm. The enzyme catalyses adenosine(1518)/adenosine(1519) in 16S rRNA + 4 S-adenosyl-L-methionine = N(6)-dimethyladenosine(1518)/N(6)-dimethyladenosine(1519) in 16S rRNA + 4 S-adenosyl-L-homocysteine + 4 H(+). In terms of biological role, specifically dimethylates two adjacent adenosines (A1518 and A1519) in the loop of a conserved hairpin near the 3'-end of 16S rRNA in the 30S particle. May play a critical role in biogenesis of 30S subunits. The polypeptide is Ribosomal RNA small subunit methyltransferase A (Shigella dysenteriae serotype 1 (strain Sd197)).